A 1400-amino-acid chain; its full sequence is DNA-directed RNA polymerase subunit beta' (1400 aa).

The Zn(2+) site is built by cysteine 71, cysteine 73, cysteine 86, and cysteine 89. Residues aspartate 462, aspartate 464, and aspartate 466 each contribute to the Mg(2+) site. Residues cysteine 810, cysteine 884, cysteine 891, and cysteine 894 each contribute to the Zn(2+) site. The disordered stretch occupies residues 1377–1400 (REKQATIVPPAAPEAEPLALPPVE).

It belongs to the RNA polymerase beta' chain family. The RNAP catalytic core consists of 2 alpha, 1 beta, 1 beta' and 1 omega subunit. When a sigma factor is associated with the core the holoenzyme is formed, which can initiate transcription. Requires Mg(2+) as cofactor. It depends on Zn(2+) as a cofactor.

It catalyses the reaction RNA(n) + a ribonucleoside 5'-triphosphate = RNA(n+1) + diphosphate. In terms of biological role, DNA-dependent RNA polymerase catalyzes the transcription of DNA into RNA using the four ribonucleoside triphosphates as substrates. The polypeptide is DNA-directed RNA polymerase subunit beta' (Rhodopseudomonas palustris (strain HaA2)).